A 371-amino-acid polypeptide reads, in one-letter code: Bifunctional chorismate mutase/prephenate dehydratase (371 aa).

The region spanning 1-92 is the Chorismate mutase domain; sequence MTLKNALLAF…DSVLTQKKWI (92 aa). R11, R28, K39, D48, E52, S84, and Q88 together coordinate substrate. Residues 104 to 284 form the Prephenate dehydratase domain; it reads KISFLGSFGS…NITQFIILAQ (181 aa). Residues 285–371 are regulatory; sequence KKTYITNKKT…IKCIKILGCF (87 aa).

The protein localises to the cytoplasm. The catalysed reaction is chorismate = prephenate. It carries out the reaction prephenate + H(+) = 3-phenylpyruvate + CO2 + H2O. Its pathway is amino-acid biosynthesis; L-phenylalanine biosynthesis; phenylpyruvate from prephenate: step 1/1. It participates in metabolic intermediate biosynthesis; prephenate biosynthesis; prephenate from chorismate: step 1/1. Functionally, catalyzes the Claisen rearrangement of chorismate to prephenate and the decarboxylation/dehydration of prephenate to phenylpyruvate. This is Bifunctional chorismate mutase/prephenate dehydratase (pheA) from Buchnera aphidicola subsp. Baizongia pistaciae (strain Bp).